The sequence spans 854 residues: Nucleolar MIF4G domain-containing protein 1 (854 aa).

Residues 2–275 form a necessary for nucleolar localization and for targeting PPP1CA to the nucleolus region; sequence PRNVPEVNGV…EEDPDWQVLQ (274 aa). Position 60 is a phosphoserine (Ser-60). Disordered regions lie at residues 66–215 and 231–333; these read ESRS…PLSF and SGGG…GEKY. Positions 76 to 99 are enriched in basic residues; the sequence is PGGRKSRKELRKEKRHLRKARRLQ. Residues 104-113 are compositionally biased toward gly residues; sequence SGSGDQGGNV. Over residues 128–173 the composition is skewed to low complexity; the sequence is VRPTPAKATATPAKASAPSTNTKASAAQPKAKAKGAPGKPGPATAT. Over residues 188–197 the composition is skewed to basic and acidic residues; that stretch reads REIRKLERCL. A compositionally biased stretch (acidic residues) spans 265 to 280; the sequence is SEEDPDWQVLQEDQED. 3 stretches are compositionally biased toward basic and acidic residues: residues 281–291, 303–315, and 322–331; these read VNSKRRGEAES, RFAEVVEKSRSSS, and QESHSVESGE. Residues 301–304 carry the Required for efficient binding to PPP1CA and for targeting PPP1CA to the nucleolus motif; sequence KVRF. Ser-311, Ser-314, and Ser-315 each carry phosphoserine. The 198-residue stretch at 356–553 folds into the MIF4G domain; sequence KKHVKGLINR…ETMLALKNND (198 aa). The MI domain occupies 648–764; sequence DVRRIIFCTL…PLSVLKVVEF (117 aa).

It belongs to the CWC22 family. In terms of assembly, may interact with EIF4A1, EIF4A2 and EIF4A3. Interacts with PPP1CA and PPP1CC.

The protein localises to the nucleus. It is found in the nucleolus. In terms of biological role, plays a role in targeting PPP1CA to the nucleolus. This is Nucleolar MIF4G domain-containing protein 1 (Nom1) from Mus musculus (Mouse).